Here is an 877-residue protein sequence, read N- to C-terminus: Leucine--tRNA ligase (877 aa).

Positions P43–H53 match the 'HIGH' region motif. The short motif at K628 to S632 is the 'KMSKS' region element. An ATP-binding site is contributed by K631.

This sequence belongs to the class-I aminoacyl-tRNA synthetase family.

It is found in the cytoplasm. It catalyses the reaction tRNA(Leu) + L-leucine + ATP = L-leucyl-tRNA(Leu) + AMP + diphosphate. In Brucella canis (strain ATCC 23365 / NCTC 10854 / RM-666), this protein is Leucine--tRNA ligase.